A 44-amino-acid polypeptide reads, in one-letter code: Poly-ADP-ribosylation-amplifying and CtIP-maintaining micropeptide (44 aa).

Residues 1–44 (MAASGGTKKAQSGGRRLREPSSRPSRRARQRPRRGALRKAGRFL) form a disordered region. Positions 24 to 44 (PSRRARQRPRRGALRKAGRFL) are enriched in basic residues.

In terms of assembly, interacts with KLHL15; preventing ubiquitination and degradation of RBBP8/CtIP. Interacts with PARP1.

The protein resides in the nucleus. It localises to the nucleolus. Its subcellular location is the chromosome. In terms of biological role, micropeptide that acts as a regulator of DNA repair both by preventing KLHL15-mediated ubiquitination and degradation of RBBP8/CtIP, and by promoting the poly-ADP-ribosyltransferase activity of PARP1. Prevents KLHL15-mediated ubiquitination of RBBP8/CtIP by competitively blocking the association between KLHL15 and RBBP8/CtIP. Recruited to DNA damage sites via association with poly-ADP-ribose chains, and enhances the poly-ADP-ribosyltransferase activity of PARP1. This is Poly-ADP-ribosylation-amplifying and CtIP-maintaining micropeptide from Homo sapiens (Human).